A 461-amino-acid polypeptide reads, in one-letter code: Argininosuccinate lyase (461 aa).

It belongs to the lyase 1 family. Argininosuccinate lyase subfamily.

It localises to the cytoplasm. It catalyses the reaction 2-(N(omega)-L-arginino)succinate = fumarate + L-arginine. Its pathway is amino-acid biosynthesis; L-arginine biosynthesis; L-arginine from L-ornithine and carbamoyl phosphate: step 3/3. The sequence is that of Argininosuccinate lyase from Chlorobium luteolum (strain DSM 273 / BCRC 81028 / 2530) (Pelodictyon luteolum).